Consider the following 78-residue polypeptide: Large ribosomal subunit protein bL28 (78 aa).

It belongs to the bacterial ribosomal protein bL28 family.

The polypeptide is Large ribosomal subunit protein bL28 (Trichodesmium erythraeum (strain IMS101)).